The chain runs to 2462 residues: Serine/threonine-protein kinase Wnk (2462 aa).

3 disordered regions span residues 18-133 (NRAR…ASKS), 146-248 (NTLP…KSSS), and 365-461 (EDDV…DDDP). Polar residues-rich tracts occupy residues 29–58 (DGTT…NIQK) and 65–78 (NRSA…NPTS). Over residues 94–124 (TLSAHTSTSSTTSIQSSPIEPASSLPTLNTT) the composition is skewed to low complexity. Positions 146-155 (NTLPGKTASS) are enriched in polar residues. 3 stretches are compositionally biased toward basic and acidic residues: residues 190–205 (QSRE…KIEP), 237–247 (DTKKMEARKSS), and 396–413 (QSEK…KAES). A compositionally biased stretch (low complexity) spans 414-452 (SEASAEEAAVTGSSTDASASPLPSTSLVSTTSSATSITK). The 259-residue stretch at 471–729 (FKYDKEVGRG…CNELLESEFF (259 aa)) folds into the Protein kinase domain. ATP-binding positions include Ser-481, 551 to 554 (TELM), and Lys-601. The active-site Proton acceptor is Asp-618. Ser-628 and Ser-632 each carry phosphoserine; by autocatalysis. Disordered stretches follow at residues 844–873 (LQKQ…DGVK), 893–923 (LALS…QPVQ), and 1006–1055 (PQQQ…LQQQ). Residues 855–870 (VDEDEEEEEESEDEED) show a composition bias toward acidic residues. Residues 893 to 918 (LALSTNSVEPQQLSTRSNTSIPNSGI) show a composition bias toward polar residues. Low complexity-rich tracts occupy residues 1006 to 1034 (PQQQ…QPQT) and 1041 to 1055 (HEQQ…LQQQ). Residues 1142–1178 (AQHQLQQLQQQQLQQQQLQQQQQIQQQQLQQQQLQQQ) are a coiled coil. A compositionally biased stretch (polar residues) spans 1236–1251 (QGGQVTLSDAQQQQHP). Disordered regions lie at residues 1236–1256 (QGGQ…FSAV), 1322–1382 (QQQQ…EQIS), 1418–1465 (GALE…PKLS), 1554–1578 (LTRQ…SDIT), 1615–1699 (NIPN…KDKK), 1762–1790 (DTSE…GNQG), 1828–1895 (QASP…SVGS), 1929–1966 (HEKQ…SINQ), and 2122–2229 (THVQ…FIQS). The segment covering 1559 to 1568 (STFRSHQRHR) has biased composition (basic residues). Positions 1627 to 1641 (STPPTTTSTMSSSST) are enriched in low complexity. The span at 1642 to 1674 (ASRDAPNSSNDVTIGSGSVSRKTSTASEYTSLS) shows a compositional bias: polar residues. 3 stretches are compositionally biased toward polar residues: residues 1828–1852 (QASP…TKPN), 1861–1894 (SVGQ…NSVG), and 1943–1966 (SATS…SINQ). The segment covering 2125–2136 (QQPSNLQPQQQS) has biased composition (low complexity). Over residues 2137–2160 (VHPNMTQQPQQTPLNGHPSMVNTL) the composition is skewed to polar residues. Residues 2161–2211 (QQQPPQQSLPMQTIQSQQQQHNQMPIISQQQQQQILMQQQQQQGSQQGSQQ) are compositionally biased toward low complexity. Positions 2212-2229 (FNLPGTQQTHPQHQFIQS) are enriched in polar residues.

Belongs to the protein kinase superfamily. Ser/Thr protein kinase family. WNK subfamily. Requires Mg(2+) as cofactor. In terms of processing, autophosphorylated. Autophosphorylation at Ser-628 and Ser-632 promotes its activity.

The protein resides in the cytoplasm. It carries out the reaction L-seryl-[protein] + ATP = O-phospho-L-seryl-[protein] + ADP + H(+). It catalyses the reaction L-threonyl-[protein] + ATP = O-phospho-L-threonyl-[protein] + ADP + H(+). With respect to regulation, activated in response to hyperosmotic stress: cell shrinkage promotes formation of a membraneless compartment that concentrates wnk-1 with its downstrem substrates. Activation requires autophosphorylation. Autophosphorylation and subsequent activation is inhibited by increases in intracellular Cl(-) or K(+). Its function is as follows. Serine/threonine-protein kinase component of the WNK-SPAK/OSR1 kinase cascade, which plays an important role in the regulation of electrolyte homeostasis and regulatory volume increase in response to hyperosmotic stress. Wnk mediates regulatory volume increase in response to hyperosmotic stress by acting as a molecular crowding sensor, which senses cell shrinkage and mediates formation of a membraneless compartment by undergoing liquid-liquid phase separation. The membraneless compartment concentrates Wnk with its substrate Fray, promoting Wnk-dependent phosphorylation and activation of downstream kinase Fray. Following activation, Fray catalyzes phosphorylation of ion cotransporters Ncc69 and Irk1, regulating their activity. Phosphorylation of Na-K-Cl cotransporter Ncc69 promotes its activation and ion influx. Involved in circadian rhythms in small ventral lateral (sLNv) pacemaker neurons: in the morning, Wnk activity is repressed by high levels of intracellular chloride; in contrast Wnk activation in the evening promotes the activation of the inwardly rectifying potassium channel Irk1 via Fray. Acts as a positive regulator of the canonical Wnt signaling pathway during wing disk development. The protein is Serine/threonine-protein kinase Wnk of Drosophila melanogaster (Fruit fly).